Here is a 501-residue protein sequence, read N- to C-terminus: Cytochrome P450 2S1 (501 aa).

Cysteine 441 contributes to the heme binding site.

The protein belongs to the cytochrome P450 family. Requires heme as cofactor.

Its subcellular location is the endoplasmic reticulum membrane. The protein localises to the microsome membrane. It catalyses the reaction all-trans-retinoate + reduced [NADPH--hemoprotein reductase] + O2 = all-trans-5,6-epoxyretinoate + oxidized [NADPH--hemoprotein reductase] + H2O + H(+). The enzyme catalyses all-trans-retinoate + reduced [NADPH--hemoprotein reductase] + O2 = all-trans-4-hydroxyretinoate + oxidized [NADPH--hemoprotein reductase] + H2O + H(+). The catalysed reaction is (5S)-hydroperoxy-(6E,8Z,11Z,14Z)-eicosatetraenoate = 5-oxo-(6E,8Z,11Z,14Z)-eicosatetraenoate + H2O. It carries out the reaction (12S)-hydroperoxy-(5Z,8Z,10E,14Z)-eicosatetraenoate = 12-oxo-(5Z,8Z,10E,14Z)-eicosatetraenoate + H2O. It catalyses the reaction (15S)-hydroperoxy-(5Z,8Z,11Z,13E)-eicosatetraenoate = 15-oxo-(5Z,8Z,11Z,13E)-eicosatetraenoate + H2O. The enzyme catalyses prostaglandin H2 = thromboxane A2. The catalysed reaction is prostaglandin H2 = (12S)-hydroxy-(5Z,8E,10E)-heptadecatrienoate + malonaldehyde. It carries out the reaction (13S)-hydroperoxy-(9Z,11E)-octadecadienoate = 13-oxo-(9Z,11E)-octadecadienoate + H2O. It participates in lipid metabolism; fatty acid metabolism. Its function is as follows. A cytochrome P450 monooxygenase involved in the metabolism of retinoids and eicosanoids. In epidermis, may contribute to the oxidative metabolism of all-trans-retinoic acid. For this activity, uses molecular oxygen inserting one oxygen atom into a substrate, and reducing the second into a water molecule, with two electrons provided by NADPH via cytochrome P450 reductase (NADPH--hemoprotein reductase). Additionally, displays peroxidase and isomerase activities toward various oxygenated eicosanoids such as prostaglandin H2 (PGH2) and hydroperoxyeicosatetraenoates (HPETEs). Independently of cytochrome P450 reductase, NADPH, and O2, catalyzes the breakdown of PGH2 to hydroxyheptadecatrienoic acid (HHT) and malondialdehyde (MDA), which is known to act as a mediator of DNA damage. This chain is Cytochrome P450 2S1 (Cyp2s1), found in Mus musculus (Mouse).